Here is a 1333-residue protein sequence, read N- to C-terminus: Xanthine dehydrogenase/oxidase (1333 aa).

The 2Fe-2S ferredoxin-type domain occupies 4-91 (DKLVFFVNGR…HVAVTTVEGI (88 aa)). [2Fe-2S] cluster-binding residues include Cys43, Cys48, Cys51, Cys73, Cys113, Cys116, Cys148, and Cys150. The 186-residue stretch at 229–414 (FEGERVTWIQ…LSIEIPYSRE (186 aa)) folds into the FAD-binding PCMH-type domain. Residues 257–264 (LVVGNTEI), Phe337, 347–351 (SVGGN), Asp360, Leu404, and Lys422 contribute to the FAD site. Intrachain disulfides connect Cys509–Cys1318 and Cys536–Cys993. Positions 768 and 799 each coordinate Mo-molybdopterin. Substrate is bound by residues Glu803 and Arg881. Mo-molybdopterin is bound at residue Arg913. Residues Phe915 and Thr1011 each contribute to the substrate site. Ala1080 contributes to the Mo-molybdopterin binding site. The active-site Proton acceptor is the Glu1262.

It belongs to the xanthine dehydrogenase family. In terms of assembly, homodimer. Interacts with BTN1A1. Requires [2Fe-2S] cluster as cofactor. The cofactor is FAD. Mo-molybdopterin serves as cofactor. Post-translationally, subject to partial proteolysis; this alters the enzyme from the dehydrogenase form (D) to the oxidase form (O). In terms of processing, contains sulfhydryl groups that are easily oxidized (in vitro); this alters the enzyme from the dehydrogenase form (D) to the oxidase form (O). As to expression, detected in milk (at protein level).

The protein resides in the cytoplasm. Its subcellular location is the peroxisome. It is found in the secreted. It catalyses the reaction xanthine + NAD(+) + H2O = urate + NADH + H(+). It carries out the reaction hypoxanthine + NAD(+) + H2O = xanthine + NADH + H(+). The enzyme catalyses xanthine + O2 + H2O = urate + H2O2. Its activity is regulated as follows. Can be converted from the dehydrogenase form (D) to the oxidase form (O) irreversibly by proteolysis or reversibly through the oxidation of sulfhydryl groups. In terms of biological role, key enzyme in purine degradation. Catalyzes the oxidation of hypoxanthine to xanthine. Catalyzes the oxidation of xanthine to uric acid. Contributes to the generation of reactive oxygen species. Has also low oxidase activity towards aldehydes (in vitro). This chain is Xanthine dehydrogenase/oxidase (XDH), found in Homo sapiens (Human).